The primary structure comprises 68 residues: Neuronal regeneration-related protein (68 aa).

The segment at 21–54 (MEGRLPKGRLPVPKEVNRKKNDETNAASLTPLGS) is disordered. A compositionally biased stretch (polar residues) spans 44 to 54 (TNAASLTPLGS).

Interacts with the latency-associated peptides (LAP) of TGFB1 and TGFB2; the interaction results in a decrease in TGFB autoinduction. Interacts with FLNA. In terms of processing, phosphorylated on Ser-59. Phosphorylation decreases stability and activity.

It is found in the cytoplasm. In terms of biological role, may have roles in neural function and cellular differentiation. Ectopic expression promotes axonal regeneration, induces differentiation of fibroblast into myofibroblast, induces myofibroblast ameboid migration, augments motility of gliomas, and increases retinoic-acid regulation of lipid-droplet biogenesis. Down-regulates the expression of TGFB1 and TGFB2 but not of TGFB3. May play a role in the regulation of alveolar generation. In Pongo abelii (Sumatran orangutan), this protein is Neuronal regeneration-related protein (NREP).